The sequence spans 148 residues: Ribonuclease pancreatic (148 aa).

An N-terminal signal peptide occupies residues 1–25 (MGLEKSLMLFPLLVLVLGLVQPSLG). The substrate site is built by K32 and R35. Catalysis depends on H37, which acts as the Proton acceptor. Disulfide bonds link C50–C108, C64–C119, C82–C134, and C89–C96. Substrate-binding positions include 65-69 (KPVNT), K90, and R109. H143 acts as the Proton donor in catalysis.

Belongs to the pancreatic ribonuclease family. As to quaternary structure, monomer. Interacts with and forms tight 1:1 complexes with RNH1. Dimerization of two such complexes may occur. Interaction with RNH1 inhibits this protein. Pancreas.

Its subcellular location is the secreted. The catalysed reaction is an [RNA] containing cytidine + H2O = an [RNA]-3'-cytidine-3'-phosphate + a 5'-hydroxy-ribonucleotide-3'-[RNA].. It catalyses the reaction an [RNA] containing uridine + H2O = an [RNA]-3'-uridine-3'-phosphate + a 5'-hydroxy-ribonucleotide-3'-[RNA].. Its function is as follows. Endonuclease that catalyzes the cleavage of RNA on the 3' side of pyrimidine nucleotides. Acts on single-stranded and double-stranded RNA. The sequence is that of Ribonuclease pancreatic (RNASE1) from Gerbilliscus gambianus (Gambian gerbil).